Here is a 1906-residue protein sequence, read N- to C-terminus: Retinoic acid-induced protein 1 (1906 aa).

Disordered stretches follow at residues 1-261 (MQSF…APGQ), 273-299 (RLSY…RHHA), 335-370 (YQTF…LENF), 469-520 (VSRT…YLSG), 538-571 (SPAR…SDDS), and 656-712 (SAWP…GTKP). Positions 13–24 (KQQNYQQTSQET) are enriched in polar residues. The span at 66–75 (PSGTAAAVAA) shows a compositional bias: low complexity. Over residues 124–134 (PQPPPPQPQPL) the composition is skewed to pro residues. Residues 213–226 (SQSFPTSSTYSSSV) are compositionally biased toward low complexity. Polar residues predominate over residues 252 to 261 (TASSSLAPGQ). 2 stretches are compositionally biased toward low complexity: residues 278 to 291 (QQQQ…QQQQ) and 339 to 353 (SPSS…VGRS). Serine 339 and serine 345 each carry phosphoserine. Position 472 is a phosphothreonine (threonine 472). The segment covering 541 to 563 (RVNSNSKAKPESVSTCSVTSPDD) has biased composition (polar residues). Residues serine 568 and serine 683 each carry the phosphoserine modification. Threonine 696 carries the post-translational modification Phosphothreonine. Residue serine 805 is modified to Phosphoserine. Lysine 811 is covalently cross-linked (Glycyl lysine isopeptide (Lys-Gly) (interchain with G-Cter in SUMO2)). A Glycyl lysine isopeptide (Lys-Gly) (interchain with G-Cter in SUMO1) cross-link involves residue lysine 819. Phosphoserine occurs at positions 880 and 892. Lysine 901 is covalently cross-linked (Glycyl lysine isopeptide (Lys-Gly) (interchain with G-Cter in SUMO1); alternate). A Glycyl lysine isopeptide (Lys-Gly) (interchain with G-Cter in SUMO2); alternate cross-link involves residue lysine 901. Positions 937 to 947 (KVQSWFESSLS) are enriched in polar residues. 5 disordered regions span residues 937-1299 (KVQS…ETPD), 1344-1570 (FACK…PLDP), 1613-1637 (VVNS…SSSS), 1746-1775 (AAAA…SARG), and 1794-1819 (EEAA…GGEA). The span at 950–962 (KPGEEGPDGERAP) shows a compositional bias: basic and acidic residues. The segment covering 996–1005 (KSLRSRRVHR) has biased composition (basic residues). At serine 1064 the chain carries Phosphoserine. Residue threonine 1068 is modified to Phosphothreonine. Residues 1101 to 1119 (PSPKAASSPSNPAALPVAS) are compositionally biased toward low complexity. Phosphoserine is present on serine 1122. 2 consecutive short sequence motifs (nuclear localization signal) follow at residues 1160-1177 (RRRP…TKKL) and 1223-1240 (KRKS…RNLV). Low complexity predominate over residues 1242–1252 (RSRSSSSSNAS). A phosphoserine mark is found at serine 1352, serine 1358, and serine 1374. Lysine 1425 is covalently cross-linked (Glycyl lysine isopeptide (Lys-Gly) (interchain with G-Cter in SUMO2)). Residue serine 1431 is modified to Phosphoserine. The span at 1444–1453 (PKKRSRKGRA) shows a compositional bias: basic residues. Polar residues-rich tracts occupy residues 1482–1491 (SGTQGASEDN) and 1517–1534 (QPQT…YSSY). Residues 1535 to 1545 (SKRKRLTRGRA) show a composition bias toward basic residues. The span at 1628 to 1637 (SSSASSSSSS) shows a compositional bias: low complexity. The C2HC pre-PHD-type zinc finger occupies 1780–1835 (LQSCYCCDGREDGGEEAAPADKGRKHECSKEAPAEPGGEAQEHWVHEACAVWTGGV). The span at 1798-1812 (PADKGRKHECSKEAP) shows a compositional bias: basic and acidic residues. The PHD-type zinc-finger motif lies at 1855–1903 (MMCSSCQEAGATIGCCHKGCLHTYHYPCASDAGCIFIEENFSLKCPKHK).

As to expression, expressed in all tissues examined with higher expression in the heart and brain. No expression was seen in the corpus callosum of the brain.

The protein localises to the cytoplasm. It is found in the nucleus. Its function is as follows. Transcriptional regulator of the circadian clock components: CLOCK, BMAL1, BMAL2, PER1/3, CRY1/2, NR1D1/2 and RORA/C. Positively regulates the transcriptional activity of CLOCK a core component of the circadian clock. Regulates transcription through chromatin remodeling by interacting with other proteins in chromatin as well as proteins in the basic transcriptional machinery. May be important for embryonic and postnatal development. May be involved in neuronal differentiation. The protein is Retinoic acid-induced protein 1 (RAI1) of Homo sapiens (Human).